We begin with the raw amino-acid sequence, 824 residues long: Protein bicaudal D homolog 2 (824 aa).

Position 2 is an N-acetylserine (Ser-2). A coiled-coil region spans residues 20-269 (EWLRAEVKRL…ELSHYMSIND (250 aa)). An interacts with DYNLL1, DYNC1H1, DYNC1I2, DCTN1 and DCTN2 region spans residues 25 to 398 (EVKRLSHELA…RLTENLSALR (374 aa)). 3 positions are modified to phosphoserine: Ser-190, Ser-224, and Ser-318. The segment at 311 to 330 (LPLDNKTSTPKKEGLAPPSP) is disordered. Phosphothreonine is present on Thr-319. Residues 334–599 (SDLLSELNIS…LLAPEAGRAD (266 aa)) form an interaction with KIF5A region. The stretch at 338–537 (SELNISEIQK…VTFSEELANL (200 aa)) forms a coiled coil. A phosphoserine mark is found at Ser-343 and Ser-395. Disordered regions lie at residues 398–425 (RRLQASKERQTALDNEKDRDSHEDGDYY), 559–622 (EGQG…DPRR), and 804–824 (EQTRRGRAKAAPKTKPATPSL). Over residues 402–422 (ASKERQTALDNEKDRDSHEDG) the composition is skewed to basic and acidic residues. Phosphoserine is present on residues Ser-568, Ser-574, and Ser-582. The interval 590–824 (LLAPEAGRAD…PKTKPATPSL (235 aa)) is interaction with RANBP2. Thr-602 carries the phosphothreonine modification. Positions 604 to 618 (DSSPSPGSSLPSPLS) are enriched in low complexity. Residues 666-808 (DKDKEALMEE…LELDHEQTRR (143 aa)) are a coiled coil. The interacts with RAB6A stretch occupies residues 666 to 814 (DKDKEALMEE…QTRRGRAKAA (149 aa)). Thr-821 is subject to Phosphothreonine. At Ser-823 the chain carries Phosphoserine.

The protein belongs to the BicD family. As to quaternary structure, part of a tripartite complex with dynein and dynactin, acts an adapter linking the dynein motor complex and dynactin. Interacts with CPNE4 (via VWFA domain). Interacts with RAB6A. Interacts with NEK9. Interacts with DNAI1. Interacts with DYNC1H1. Interacts with RANBP2. Binds preferentially to tyrosinated microtubules than to detyrosinated microtubules. Interacts with DYNLL1, DYNC1I2; DCTN1, DCTN2 and KIF5A. Interacts with KIF1C. Phosphorylated by NEK9 in vitro. As to expression, ubiquitous.

It localises to the golgi apparatus. The protein resides in the cytoplasm. Its subcellular location is the cytoskeleton. It is found in the nucleus envelope. The protein localises to the nucleus. It localises to the nuclear pore complex. Functionally, acts as an adapter protein linking the dynein motor complex to various cargos and converts dynein from a non-processive to a highly processive motor in the presence of dynactin. Facilitates and stabilizes the interaction between dynein and dynactin and activates dynein processivity (the ability to move along a microtubule for a long distance without falling off the track). Facilitates the binding of RAB6A to the Golgi by stabilizing its GTP-bound form. Regulates coat complex coatomer protein I (COPI)-independent Golgi-endoplasmic reticulum transport via its interaction with RAB6A and recruitment of the dynein-dynactin motor complex. Contributes to nuclear and centrosomal positioning prior to mitotic entry through regulation of both dynein and kinesin-1. During G2 phase of the cell cycle, associates with RANBP2 at the nuclear pores and recruits dynein and dynactin to the nuclear envelope to ensure proper positioning of the nucleus relative to centrosomes prior to the onset of mitosis. In Homo sapiens (Human), this protein is Protein bicaudal D homolog 2.